A 1396-amino-acid polypeptide reads, in one-letter code: uncharacterized protein (1396 aa).

ATP is bound at residue 88-95 (AYKKWGRS). 2 disordered regions span residues 146 to 165 (EKIH…LSPT) and 198 to 388 (KPCS…VKDL). A compositionally biased stretch (low complexity) spans 198-221 (KPCSYSSSSSSSTVPPASTDTSSP). Residues 242-268 (MHEKAQSRSRHEKESKLSSSTIEEKPA) show a composition bias toward basic and acidic residues. Positions 286–300 (SWSSGSSEAGSSSSG) are enriched in low complexity. Residues 312-327 (VKVRHKAREIRNRKGR) are compositionally biased toward basic residues. A phosphoserine mark is found at Ser817 and Ser1083. Positions 1113 to 1137 (PISASELSPGGGSESEFESEKDEAS) are disordered. 2 positions are modified to phosphoserine: Ser1197 and Ser1339. The interval 1347–1396 (TGERGSETKPNGLHRKMCSSASSDTGDTGSEAGGEWVGPSREELFSRTHL) is disordered. The segment covering 1365–1376 (SSASSDTGDTGS) has biased composition (low complexity). The segment covering 1386-1396 (SREELFSRTHL) has biased composition (basic and acidic residues).

This is an uncharacterized protein from Mus musculus (Mouse).